Consider the following 150-residue polypeptide: 3-hydroxyacyl-[acyl-carrier-protein] dehydratase FabZ (150 aa).

His51 is an active-site residue.

The protein belongs to the thioester dehydratase family. FabZ subfamily.

It is found in the cytoplasm. It catalyses the reaction a (3R)-hydroxyacyl-[ACP] = a (2E)-enoyl-[ACP] + H2O. In terms of biological role, involved in unsaturated fatty acids biosynthesis. Catalyzes the dehydration of short chain beta-hydroxyacyl-ACPs and long chain saturated and unsaturated beta-hydroxyacyl-ACPs. The chain is 3-hydroxyacyl-[acyl-carrier-protein] dehydratase FabZ from Rubrobacter xylanophilus (strain DSM 9941 / JCM 11954 / NBRC 16129 / PRD-1).